A 559-amino-acid chain; its full sequence is Small ribosomal subunit protein uS3m (559 aa).

The interval 113–134 (EGTEEERNEVRGRGAGKRVESI) is disordered. Over residues 120 to 134 (NEVRGRGAGKRVESI) the composition is skewed to basic and acidic residues.

It belongs to the universal ribosomal protein uS3 family.

The protein localises to the mitochondrion. In Zea mays (Maize), this protein is Small ribosomal subunit protein uS3m (RPS3).